A 53-amino-acid polypeptide reads, in one-letter code: Large ribosomal subunit protein eL40 (53 aa).

The protein belongs to the eukaryotic ribosomal protein eL40 family.

The chain is Large ribosomal subunit protein eL40 from Staphylothermus marinus (strain ATCC 43588 / DSM 3639 / JCM 9404 / F1).